Here is a 166-residue protein sequence, read N- to C-terminus: Regulator of ribonuclease activity A (166 aa).

This sequence belongs to the RraA family. As to quaternary structure, homotrimer. Binds to both RNA-binding sites in the C-terminal region of Rne and to RhlB.

Its subcellular location is the cytoplasm. In terms of biological role, globally modulates RNA abundance by binding to RNase E (Rne) and regulating its endonucleolytic activity. Can modulate Rne action in a substrate-dependent manner by altering the composition of the degradosome. Modulates RNA-binding and helicase activities of the degradosome. The polypeptide is Regulator of ribonuclease activity A (Histophilus somni (strain 2336) (Haemophilus somnus)).